Consider the following 114-residue polypeptide: T cell receptor alpha variable 12-3 (114 aa).

Residues 1–21 (MMKSLRVLLVILWLQLSWVWS) form the signal peptide. One can recognise an Ig-like domain in the interval 24–114 (KEVEQDPGPL…DSATYLCAMS (91 aa)). A glycan (N-linked (GlcNAc...) asparagine) is linked at asparagine 44. A disulfide bridge links cysteine 45 with cysteine 111.

In terms of assembly, alpha-beta TR is a heterodimer composed of an alpha and beta chain; disulfide-linked. The alpha-beta TR is associated with the transmembrane signaling CD3 coreceptor proteins to form the TR-CD3 (TcR or TCR). The assembly of alpha-beta TR heterodimers with CD3 occurs in the endoplasmic reticulum where a single alpha-beta TR heterodimer associates with one CD3D-CD3E heterodimer, one CD3G-CD3E heterodimer and one CD247 homodimer forming a stable octameric structure. CD3D-CD3E and CD3G-CD3E heterodimers preferentially associate with TR alpha and TR beta chains, respectively. The association of the CD247 homodimer is the last step of TcR assembly in the endoplasmic reticulum and is required for transport to the cell surface.

Its subcellular location is the cell membrane. V region of the variable domain of T cell receptor (TR) alpha chain that participates in the antigen recognition. Alpha-beta T cell receptors are antigen specific receptors which are essential to the immune response and are present on the cell surface of T lymphocytes. Recognize peptide-major histocompatibility (MH) (pMH) complexes that are displayed by antigen presenting cells (APC), a prerequisite for efficient T cell adaptive immunity against pathogens. Binding of alpha-beta TR to pMH complex initiates TR-CD3 clustering on the cell surface and intracellular activation of LCK that phosphorylates the ITAM motifs of CD3G, CD3D, CD3E and CD247 enabling the recruitment of ZAP70. In turn ZAP70 phosphorylates LAT, which recruits numerous signaling molecules to form the LAT signalosome. The LAT signalosome propagates signal branching to three major signaling pathways, the calcium, the mitogen-activated protein kinase (MAPK) kinase and the nuclear factor NF-kappa-B (NF-kB) pathways, leading to the mobilization of transcription factors that are critical for gene expression and essential for T cell growth and differentiation. The T cell repertoire is generated in the thymus, by V-(D)-J rearrangement. This repertoire is then shaped by intrathymic selection events to generate a peripheral T cell pool of self-MH restricted, non-autoaggressive T cells. Post-thymic interaction of alpha-beta TR with the pMH complexes shapes TR structural and functional avidity. In Homo sapiens (Human), this protein is T cell receptor alpha variable 12-3.